The sequence spans 377 residues: CaM kinase-like vesicle-associated protein (377 aa).

The 264-residue stretch at 24 to 287 (YDLGQLIKTE…AADAISHEWI (264 aa)) folds into the Protein kinase domain. The segment at 324-377 (MKRLRAPEQTDPGTPSPSKDSDKTPSMATPAPSPANTPAEGAPSLPCPSPDTTG) is disordered. Over residues 347–362 (TPSMATPAPSPANTPA) the composition is skewed to low complexity. The segment covering 368 to 377 (LPCPSPDTTG) has biased composition (pro residues).

This sequence belongs to the protein kinase superfamily. CAMK Ser/Thr protein kinase family. As to quaternary structure, interacts with calmodulin, in the presence of calcium. Requires Ca(2+) as cofactor.

It is found in the cytoplasmic vesicle membrane. Its function is as follows. Does not appear to have detectable kinase activity. This Xenopus laevis (African clawed frog) protein is CaM kinase-like vesicle-associated protein (camkv).